We begin with the raw amino-acid sequence, 421 residues long: 4-hydroxy-3-methylbut-2-en-1-yl diphosphate synthase (flavodoxin) (421 aa).

Residues C298, C301, C344, and E351 each contribute to the [4Fe-4S] cluster site.

Belongs to the IspG family. Requires [4Fe-4S] cluster as cofactor.

The catalysed reaction is (2E)-4-hydroxy-3-methylbut-2-enyl diphosphate + oxidized [flavodoxin] + H2O + 2 H(+) = 2-C-methyl-D-erythritol 2,4-cyclic diphosphate + reduced [flavodoxin]. The protein operates within isoprenoid biosynthesis; isopentenyl diphosphate biosynthesis via DXP pathway; isopentenyl diphosphate from 1-deoxy-D-xylulose 5-phosphate: step 5/6. In terms of biological role, converts 2C-methyl-D-erythritol 2,4-cyclodiphosphate (ME-2,4cPP) into 1-hydroxy-2-methyl-2-(E)-butenyl 4-diphosphate. The sequence is that of 4-hydroxy-3-methylbut-2-en-1-yl diphosphate synthase (flavodoxin) from Neisseria meningitidis serogroup C (strain 053442).